Here is a 360-residue protein sequence, read N- to C-terminus: Peptide chain release factor 1 (360 aa).

N5-methylglutamine is present on Gln-237.

Belongs to the prokaryotic/mitochondrial release factor family. Methylated by PrmC. Methylation increases the termination efficiency of RF1.

The protein resides in the cytoplasm. Peptide chain release factor 1 directs the termination of translation in response to the peptide chain termination codons UAG and UAA. This Pseudomonas syringae pv. tomato (strain ATCC BAA-871 / DC3000) protein is Peptide chain release factor 1.